We begin with the raw amino-acid sequence, 227 residues long: Putative methylase YubD (227 aa).

Belongs to the N(4)/N(6)-methyltransferase family.

Its function is as follows. A putative beta subtype methylase whose recognition site is unknown. The protein is Putative methylase YubD (yubD) of Escherichia coli (strain K12).